A 254-amino-acid polypeptide reads, in one-letter code: uncharacterized protein (254 aa).

The region spanning 6–239 (LSVDGVEFAY…NIKAVYGVDA (234 aa)) is the ABC transporter domain. An ATP-binding site is contributed by 38 to 45 (GVNGAGKS).

This sequence belongs to the ABC transporter superfamily.

This is an uncharacterized protein from Methanocaldococcus jannaschii (strain ATCC 43067 / DSM 2661 / JAL-1 / JCM 10045 / NBRC 100440) (Methanococcus jannaschii).